We begin with the raw amino-acid sequence, 219 residues long: Glycerol-3-phosphate acyltransferase 2 (219 aa).

5 helical membrane-spanning segments follow: residues 1–21, 55–75, 93–113, 135–155, and 160–180; these read MVFW…GSTP, WPAL…VVFA, ALDL…AVLL, VLLA…GVAL, and IVSL…CGLE.

Belongs to the PlsY family. As to quaternary structure, probably interacts with PlsX.

Its subcellular location is the cell inner membrane. It catalyses the reaction an acyl phosphate + sn-glycerol 3-phosphate = a 1-acyl-sn-glycero-3-phosphate + phosphate. It functions in the pathway lipid metabolism; phospholipid metabolism. Its function is as follows. Catalyzes the transfer of an acyl group from acyl-phosphate (acyl-PO(4)) to glycerol-3-phosphate (G3P) to form lysophosphatidic acid (LPA). This enzyme utilizes acyl-phosphate as fatty acyl donor, but not acyl-CoA or acyl-ACP. This Rhizobium johnstonii (strain DSM 114642 / LMG 32736 / 3841) (Rhizobium leguminosarum bv. viciae) protein is Glycerol-3-phosphate acyltransferase 2.